The primary structure comprises 232 residues: Exosome complex component RRP40 (232 aa).

Belongs to the RRP40 family. Component of the RNA exosome complex. Specifically part of the catalytically inactive RNA exosome core complex.

The protein resides in the cytoplasm. The protein localises to the nucleus. It localises to the nucleolus. Its function is as follows. Non-catalytic component of the RNA exosome complex which has 3'-&gt;5' exoribonuclease activity and participates in a multitude of cellular RNA processing and degradation events. In the nucleus, the RNA exosome complex is involved in proper maturation of stable RNA species such as rRNA, snRNA and snoRNA, in the elimination of RNA processing by-products and non-coding 'pervasive' transcripts such as antisense RNA species, and of mRNAs with processing defects, thereby limiting or excluding their export to the cytoplasm. In the cytoplasm, the RNA exosome complex is involved in general mRNA turnover and specifically degrades inherently unstable mRNAs containing AU-rich elements (AREs) within their 3' untranslated regions, and in RNA surveillance pathways, preventing translation of aberrant mRNAs. The catalytic inactive RNA exosome core complex of 9 subunits is proposed to play a pivotal role in the binding and presentation of RNA for ribonucleolysis, and to serve as a scaffold for the association with catalytic subunits and accessory proteins or complexes. Required generally for normal embryonic and neuronal development. Also plays a critical role in the maintenance of neuronal function in mature flies by controlling the levels of specific mRNAs such as the synaptic regulator Arc1. In Drosophila melanogaster (Fruit fly), this protein is Exosome complex component RRP40.